The sequence spans 631 residues: Glutamyl-tRNA(Gln) amidotransferase subunit E (631 aa).

Belongs to the GatB/GatE family. GatE subfamily. As to quaternary structure, heterodimer of GatD and GatE.

The enzyme catalyses L-glutamyl-tRNA(Gln) + L-glutamine + ATP + H2O = L-glutaminyl-tRNA(Gln) + L-glutamate + ADP + phosphate + H(+). Allows the formation of correctly charged Gln-tRNA(Gln) through the transamidation of misacylated Glu-tRNA(Gln) in organisms which lack glutaminyl-tRNA synthetase. The reaction takes place in the presence of glutamine and ATP through an activated gamma-phospho-Glu-tRNA(Gln). The GatDE system is specific for glutamate and does not act on aspartate. In Methanococcus maripaludis (strain C6 / ATCC BAA-1332), this protein is Glutamyl-tRNA(Gln) amidotransferase subunit E.